We begin with the raw amino-acid sequence, 304 residues long: Protease HtpX homolog 1 (304 aa).

2 helical membrane-spanning segments follow: residues 17–37 (VTLF…IALL) and 39–59 (SWVL…WFSD). Residue His-140 coordinates Zn(2+). Residue Glu-141 is part of the active site. His-144 is a Zn(2+) binding site. 2 helical membrane passes run 151–171 (AVIT…RFAF) and 186–206 (AVLA…FLLI). Residue Glu-214 coordinates Zn(2+).

It belongs to the peptidase M48B family. Zn(2+) is required as a cofactor.

It is found in the cell membrane. The chain is Protease HtpX homolog 1 from Streptomyces coelicolor (strain ATCC BAA-471 / A3(2) / M145).